A 188-amino-acid chain; its full sequence is dCTP deaminase (188 aa).

Residues 111-116 (KSTYAR), 135-137 (TLE), Q156, Y170, and Q180 each bind dCTP. E137 acts as the Proton donor/acceptor in catalysis.

It belongs to the dCTP deaminase family. As to quaternary structure, homotrimer.

It carries out the reaction dCTP + H2O + H(+) = dUTP + NH4(+). It functions in the pathway pyrimidine metabolism; dUMP biosynthesis; dUMP from dCTP (dUTP route): step 1/2. Catalyzes the deamination of dCTP to dUTP. In Pseudomonas putida (strain W619), this protein is dCTP deaminase.